A 483-amino-acid chain; its full sequence is O-acetyltransferase pboB (483 aa).

This sequence belongs to the fumigaclavine B O-acetyltransferase family. In terms of assembly, monomer.

It participates in secondary metabolite biosynthesis. Its function is as follows. O-acetyltransferase; part of the gene cluster that mediates the biosynthesis of protubonine B, a hydroxylated and diacetylated cyclo-L-Trp-L-Leu derivative. Within the pathway, pboB catalyzes the acetylation of protubonine C at N-1 of the indoline ring to produce protubonine B. The first step of the protubonine B synthesis is performed by the nonribosomal peptide synthetase pboA that catalyzes the formation of cyclo-L-Trp-L-Leu by condensing L-Leu with L-Trp. The flavin-dependent monooxygenase pboD is responsible for hydroxylation at C-3 of the indole ring and subsequent formation of the pyrrolidine ring, leadind to protubonine D. Protubonine D is further diacetylated by two acetyltransferases, pboB and pboC, to form the final product protubonine B via protubonine C. The sequence is that of O-acetyltransferase pboB from Aspergillus ustus.